We begin with the raw amino-acid sequence, 67 residues long: Small ribosomal subunit protein bS21 (67 aa).

It belongs to the bacterial ribosomal protein bS21 family.

This chain is Small ribosomal subunit protein bS21, found in Acidiphilium cryptum (strain JF-5).